Here is a 170-residue protein sequence, read N- to C-terminus: Large ribosomal subunit protein uL5 (170 aa).

Belongs to the universal ribosomal protein uL5 family. Component of the large ribosomal subunit.

It localises to the nucleus. Its subcellular location is the cytoplasm. Its function is as follows. Component of the ribosome, a large ribonucleoprotein complex responsible for the synthesis of proteins in the cell. The small ribosomal subunit (SSU) binds messenger RNAs (mRNAs) and translates the encoded message by selecting cognate aminoacyl-transfer RNA (tRNA) molecules. The large subunit (LSU) contains the ribosomal catalytic site termed the peptidyl transferase center (PTC), which catalyzes the formation of peptide bonds, thereby polymerizing the amino acids delivered by tRNAs into a polypeptide chain. The nascent polypeptides leave the ribosome through a tunnel in the LSU and interact with protein factors that function in enzymatic processing, targeting, and the membrane insertion of nascent chains at the exit of the ribosomal tunnel. The protein is Large ribosomal subunit protein uL5 (RPL11) of Chlamydomonas reinhardtii (Chlamydomonas smithii).